The primary structure comprises 226 residues: Ribosome-recycling factor, mitochondrial (226 aa).

This sequence belongs to the RRF family.

Its subcellular location is the mitochondrion. Functionally, necessary for protein synthesis in mitochondria. Functions as a ribosome recycling factor in mitochondria. This Eremothecium gossypii (strain ATCC 10895 / CBS 109.51 / FGSC 9923 / NRRL Y-1056) (Yeast) protein is Ribosome-recycling factor, mitochondrial (RRF1).